A 1064-amino-acid chain; its full sequence is Valine--tRNA ligase, mitochondrial (1064 aa).

A mitochondrion-targeting transit peptide spans 1-26 (MPHLPLASFRPPFWGLRHSRGLPRFH). Residues 25-65 (FHSVSTQSEPHGSPISRRNREAKQKRLREKQATLETDIAGE) are disordered. Positions 42–56 (RNREAKQKRLREKQA) are enriched in basic and acidic residues. The short motif at 146 to 156 (PNVTGSLHIGH) is the 'HIGH' region element. A 'KMSKS' region motif is present at residues 659 to 663 (KMSKS). Lysine 662 serves as a coordination point for ATP.

It belongs to the class-I aminoacyl-tRNA synthetase family.

Its subcellular location is the mitochondrion. It catalyses the reaction tRNA(Val) + L-valine + ATP = L-valyl-tRNA(Val) + AMP + diphosphate. Its function is as follows. Catalyzes the attachment of valine to tRNA(Val) in a two-step reaction: valine is first activated by ATP to form Val-AMP and then transferred to the acceptor end of tRNA(Val). The protein is Valine--tRNA ligase, mitochondrial (VARS2) of Macaca mulatta (Rhesus macaque).